A 603-amino-acid polypeptide reads, in one-letter code: Isocitrate dehydrogenase kinase/phosphatase (603 aa).

ATP is bound by residues alanine 327–leucine 333 and lysine 348. Aspartate 383 is a catalytic residue.

Belongs to the AceK family.

It localises to the cytoplasm. It catalyses the reaction L-seryl-[isocitrate dehydrogenase] + ATP = O-phospho-L-seryl-[isocitrate dehydrogenase] + ADP + H(+). In terms of biological role, bifunctional enzyme which can phosphorylate or dephosphorylate isocitrate dehydrogenase (IDH) on a specific serine residue. This is a regulatory mechanism which enables bacteria to bypass the Krebs cycle via the glyoxylate shunt in response to the source of carbon. When bacteria are grown on glucose, IDH is fully active and unphosphorylated, but when grown on acetate or ethanol, the activity of IDH declines drastically concomitant with its phosphorylation. The sequence is that of Isocitrate dehydrogenase kinase/phosphatase from Burkholderia thailandensis (strain ATCC 700388 / DSM 13276 / CCUG 48851 / CIP 106301 / E264).